The chain runs to 238 residues: Sugar fermentation stimulation protein homolog (238 aa).

Belongs to the SfsA family.

The protein is Sugar fermentation stimulation protein homolog of Bartonella tribocorum (strain CIP 105476 / IBS 506).